We begin with the raw amino-acid sequence, 365 residues long: uncharacterized protein (365 aa).

Belongs to the mycobacterial PPE family.

This is an uncharacterized protein from Mycobacterium tuberculosis (strain ATCC 25618 / H37Rv).